The following is a 591-amino-acid chain: 4-coumarate--CoA ligase-like 3 (591 aa).

The ATP site is built by serine 228, serine 229, glycine 230, threonine 231, serine 232, and lysine 236. A (E)-4-coumaroyl-AMP-binding site is contributed by tyrosine 280. Arginine 301 is a binding site for CoA. An SBD1 region spans residues 303-375 (DAGDAVAAIG…QAFPHVDFIQ (73 aa)). (E)-4-coumaroyl-AMP-binding residues include alanine 353, glutamine 375, glycine 376, and threonine 380. Residues glutamine 375, glycine 376, threonine 380, aspartate 459, and arginine 474 each contribute to the ATP site. An SBD2 region spans residues 376–440 (GYGMTESTAV…LHGPGIMKGY (65 aa)). Positions 476 and 480 each coordinate (E)-4-coumaroyl-AMP. The CoA site is built by lysine 482 and glycine 483. Position 565 (lysine 565) interacts with ATP.

This sequence belongs to the ATP-dependent AMP-binding enzyme family. The cofactor is Mg(2+).

The enzyme catalyses (E)-4-coumarate + ATP + CoA = (E)-4-coumaroyl-CoA + AMP + diphosphate. It catalyses the reaction (E)-4-coumarate + ATP + H(+) = (E)-4-coumaroyl-AMP + diphosphate. The catalysed reaction is (E)-4-coumaroyl-AMP + CoA = (E)-4-coumaroyl-CoA + AMP + H(+). In terms of biological role, carboxylate--CoA ligase that may use 4-coumarate as substrate. Follows a two-step reaction mechanism, wherein the carboxylate substrate first undergoes adenylation by ATP, followed by a thioesterification in the presence of CoA to yield the final CoA thioester. This Oryza sativa subsp. japonica (Rice) protein is 4-coumarate--CoA ligase-like 3 (4CLL3).